An 82-amino-acid chain; its full sequence is Small ribosomal subunit protein uS17 (82 aa).

This sequence belongs to the universal ribosomal protein uS17 family. In terms of assembly, part of the 30S ribosomal subunit.

In terms of biological role, one of the primary rRNA binding proteins, it binds specifically to the 5'-end of 16S ribosomal RNA. The chain is Small ribosomal subunit protein uS17 from Shewanella woodyi (strain ATCC 51908 / MS32).